Reading from the N-terminus, the 270-residue chain is uncharacterized protein (270 aa).

A compositionally biased stretch (basic and acidic residues) spans 22 to 31; the sequence is EAPQRTEASR. Positions 22 to 42 are disordered; it reads EAPQRTEASRTHPSPFLALPG.

This is an uncharacterized protein from Homo sapiens (Human).